The chain runs to 306 residues: Uracil phosphoribosyltransferase homolog (306 aa).

2 disordered regions span residues 1–28 (MATE…NPEP) and 58–87 (SSVP…NYDA). 2 stretches are compositionally biased toward polar residues: residues 13–28 (CHNQ…NPEP) and 70–79 (GGATFNSENN). Residues R130, R139, and 173–176 (EKGN) contribute to the GTP site. R183 is a binding site for 5-phospho-alpha-D-ribose 1-diphosphate. R200 and R229 together coordinate GTP. 5-phospho-alpha-D-ribose 1-diphosphate is bound at residue 235 to 243 (YPILSTGNT). A uracil-binding site is contributed by 296-298 (THF).

It belongs to the UPRTase family.

Its subcellular location is the cytoplasm. It is found in the nucleus. This chain is Uracil phosphoribosyltransferase homolog (UPRT), found in Bos taurus (Bovine).